The following is a 311-amino-acid chain: Methionyl-tRNA formyltransferase (311 aa).

110 to 113 (SLLP) contributes to the (6S)-5,6,7,8-tetrahydrofolate binding site.

The protein belongs to the Fmt family.

The enzyme catalyses L-methionyl-tRNA(fMet) + (6R)-10-formyltetrahydrofolate = N-formyl-L-methionyl-tRNA(fMet) + (6S)-5,6,7,8-tetrahydrofolate + H(+). In terms of biological role, attaches a formyl group to the free amino group of methionyl-tRNA(fMet). The formyl group appears to play a dual role in the initiator identity of N-formylmethionyl-tRNA by promoting its recognition by IF2 and preventing the misappropriation of this tRNA by the elongation apparatus. The protein is Methionyl-tRNA formyltransferase of Streptococcus uberis (strain ATCC BAA-854 / 0140J).